A 499-amino-acid chain; its full sequence is MPVLLPSTDPGQDSRVGAPEWRQAAKATSRKAHLLTDRCGQEAVTMWQPKDSVLDPNVAHHLGRAAYMEPWRFRVEMLKGGGTLEKPPPGEGVTLWKGKMKPPAWYARLPLPMHRDARAQQTAEVVHAHARGARLTAARLGRAQHQINGQLRLLLRQREATDRRLSEVRKGLLINQQSVKLRGYRPKCEKIPDKADSLLVWEKKELKSMKRKMEKDMEISEDLLKALASCRDTLDFYCQERLQAVELMNQPLDKVLEQAGRHSWVDITRPPTPRTQGLKTPPPDPIGTYTPACAKALFEAKRLLMESKDILTEMAKNEVDIQNQQQEISNRVCSSLAQKMRETLELKERMTMTLGLMRGTIHRCMKFNQEMYVTRGIIKGPLLKRNLEAREKLNRPLVRMYQRHVGTQLPEATRLAQGTDLLTRHNLHMEKNLKELRTTHDNLAWGLNCKKIGHDVDYDVVRLRLRQRHPHVCYEQAQRLVNDWDPPTPARSQTNTASK.

S14 carries the phosphoserine modification. Residues 201–225 (WEKKELKSMKRKMEKDMEISEDLLK) are a coiled coil. The segment at 265–286 (VDITRPPTPRTQGLKTPPPDPI) is disordered. The stretch at 308-328 (KDILTEMAKNEVDIQNQQQEI) forms a coiled coil. Y372 carries the post-translational modification Phosphotyrosine.

As to quaternary structure, microtubule inner protein component of sperm flagellar doublet microtubules.

Its subcellular location is the cytoplasm. The protein resides in the cytoskeleton. It localises to the flagellum axoneme. Functionally, microtubule inner protein (MIP) part of the dynein-decorated doublet microtubules (DMTs) in sperm flagellar axoneme, which is required for motile flagellum beating. Forms an extensive interaction network cross-linking the lumen of axonemal doublet microtubules. This Mus musculus (Mouse) protein is Tektin-like protein 1.